The chain runs to 251 residues: Ubiquinone/menaquinone biosynthesis C-methyltransferase UbiE (251 aa).

S-adenosyl-L-methionine contacts are provided by residues Thr74, Asp95, 123 to 124 (NA), and Ser140.

It belongs to the class I-like SAM-binding methyltransferase superfamily. MenG/UbiE family.

The catalysed reaction is a 2-demethylmenaquinol + S-adenosyl-L-methionine = a menaquinol + S-adenosyl-L-homocysteine + H(+). It catalyses the reaction a 2-methoxy-6-(all-trans-polyprenyl)benzene-1,4-diol + S-adenosyl-L-methionine = a 5-methoxy-2-methyl-3-(all-trans-polyprenyl)benzene-1,4-diol + S-adenosyl-L-homocysteine + H(+). Its pathway is quinol/quinone metabolism; menaquinone biosynthesis; menaquinol from 1,4-dihydroxy-2-naphthoate: step 2/2. The protein operates within cofactor biosynthesis; ubiquinone biosynthesis. Methyltransferase required for the conversion of demethylmenaquinol (DMKH2) to menaquinol (MKH2) and the conversion of 2-polyprenyl-6-methoxy-1,4-benzoquinol (DDMQH2) to 2-polyprenyl-3-methyl-6-methoxy-1,4-benzoquinol (DMQH2). This chain is Ubiquinone/menaquinone biosynthesis C-methyltransferase UbiE, found in Salmonella paratyphi A (strain AKU_12601).